Here is a 429-residue protein sequence, read N- to C-terminus: Adenylosuccinate synthetase (429 aa).

Residues 12–18 (GDEGKGK) and 40–42 (GHT) each bind GTP. The active-site Proton acceptor is Asp13. Mg(2+) contacts are provided by Asp13 and Gly40. IMP contacts are provided by residues 13 to 16 (DEGK), 38 to 41 (NAGH), Thr128, Arg142, Gln223, Thr238, and Arg302. His41 acts as the Proton donor in catalysis. 298-304 (TTTGRPR) lines the substrate pocket. GTP is bound by residues Arg304, 330–332 (SID), and 412–414 (SVG).

The protein belongs to the adenylosuccinate synthetase family. As to quaternary structure, homodimer. The cofactor is Mg(2+).

It localises to the cytoplasm. The catalysed reaction is IMP + L-aspartate + GTP = N(6)-(1,2-dicarboxyethyl)-AMP + GDP + phosphate + 2 H(+). It participates in purine metabolism; AMP biosynthesis via de novo pathway; AMP from IMP: step 1/2. In terms of biological role, plays an important role in the de novo pathway of purine nucleotide biosynthesis. Catalyzes the first committed step in the biosynthesis of AMP from IMP. In Lysinibacillus sphaericus (strain C3-41), this protein is Adenylosuccinate synthetase.